The following is a 303-amino-acid chain: Aspartate carbamoyltransferase catalytic subunit (303 aa).

Carbamoyl phosphate-binding residues include arginine 54 and threonine 55. Lysine 82 contacts L-aspartate. Arginine 104, histidine 132, and glutamine 135 together coordinate carbamoyl phosphate. Arginine 165 and arginine 221 together coordinate L-aspartate. Glycine 261 and proline 262 together coordinate carbamoyl phosphate.

Belongs to the aspartate/ornithine carbamoyltransferase superfamily. ATCase family. In terms of assembly, heterododecamer (2C3:3R2) of six catalytic PyrB chains organized as two trimers (C3), and six regulatory PyrI chains organized as three dimers (R2).

It catalyses the reaction carbamoyl phosphate + L-aspartate = N-carbamoyl-L-aspartate + phosphate + H(+). It participates in pyrimidine metabolism; UMP biosynthesis via de novo pathway; (S)-dihydroorotate from bicarbonate: step 2/3. Its function is as follows. Catalyzes the condensation of carbamoyl phosphate and aspartate to form carbamoyl aspartate and inorganic phosphate, the committed step in the de novo pyrimidine nucleotide biosynthesis pathway. This is Aspartate carbamoyltransferase catalytic subunit from Koribacter versatilis (strain Ellin345).